The primary structure comprises 1079 residues: Electrogenic sodium bicarbonate cotransporter 1 (1079 aa).

The tract at residues 1-62 (MEDEAALDRG…EKKEKERVSE (62 aa)) is required for interaction with AHCYL1. Residues 1–466 (MEDEAALDRG…FASDFYDALN (466 aa)) are Cytoplasmic-facing. Tyrosine 30 is modified (phosphotyrosine). The segment covering 39–52 (YRRRRRHKRKAGHR) has biased composition (basic residues). The disordered stretch occupies residues 39 to 78 (YRRRRRHKRKAGHREKKEKERVSENYSDKSDVENADESSS). The span at 53 to 70 (EKKEKERVSENYSDKSDV) shows a compositional bias: basic and acidic residues. Phosphoserine occurs at positions 61, 65, 68, 223, 232, 233, and 245. The disordered stretch occupies residues 238–265 (FTSPENGSPAMTHRNLTSSSLNDISDKP). Residues threonine 249 and threonine 254 each carry the phosphothreonine modification. Positions 251 to 260 (RNLTSSSLND) are enriched in polar residues. Residues serine 256, serine 257, and serine 262 each carry the phosphoserine modification. The helical transmembrane segment at 467 to 491 (IQALSAILFIYLATVTNAITFGGLL) threads the bilayer. Residues 492-501 (GDATDNMQGV) are Extracellular-facing. The helical transmembrane segment at 502 to 520 (LESFLGTAVSGAVFCLFAG) threads the bilayer. Residue glutamine 521 is a topological domain, cytoplasmic. A discontinuously helical membrane pass occupies residues 522 to 542 (PLTILSSTGPVLVFERLLFNF). Residues 543-550 (SKDHNFDY) lie on the Extracellular side of the membrane. The chain crosses the membrane as a helical span at residues 551 to 571 (LEFRLWIGLWSAFLCLILVAT). Topologically, residues 572 to 585 (DASFLVQYFTRFTE) are cytoplasmic. The helical transmembrane segment at 586–609 (EGFSSLISFIFIYDAFKKMIKLAD) threads the bilayer. At 610 to 692 (YYPINSNFKV…GNNCDFVPDI (83 aa)) the chain is on the extracellular side. A helical transmembrane segment spans residues 693-710 (TLMSFILFLGTYTSSMAL). Residues 711-725 (KKFKTSRYFPTTARK) are Cytoplasmic-facing. The chain crosses the membrane as a helical span at residues 726 to 745 (LISDFAIILSILIFCVIDAL). Over 746-779 (VGVDTPKLIVPSEFKPTSPNRGWFVPPFGGNPWW) the chain is Extracellular. An interaction with CA4 region spans residues 748–779 (VDTPKLIVPSEFKPTSPNRGWFVPPFGGNPWW). The chain crosses the membrane as a helical span at residues 780–807 (VYLAAAIPALLVTILIFMDQQITAVIVN). The Cytoplasmic portion of the chain corresponds to 808 to 819 (RKEHKLKKGAGY). A helical membrane pass occupies residues 820-836 (HLDLFWVAILMVVCSFM). Alanine 837 is a topological domain (extracellular). The chain crosses the membrane as a discontinuously helical span at residues 838–855 (LPWYVAATVISIAHIDSL). Residues 856 to 877 (KMETETSAPGEQPKFLGVREQR) are Cytoplasmic-facing. The chain crosses the membrane as a helical span at residues 878–894 (VTGTLVFILTGLSVFMA). At 895 to 901 (PILKFIP) the chain is on the extracellular side. A helical membrane pass occupies residues 902-918 (MPVLYGVFLYMGVASLN). The Cytoplasmic segment spans residues 919 to 960 (GVQFMDRLKLLLMPLKHQPDFIYLRHVPLRRVHLFTFLQVLC). Positions 961–986 (LALLWILKSTVAAIIFPVMILALVAV) form an intramembrane region, discontinuously helical. The Cytoplasmic segment spans residues 987–1079 (RKGMDYLFSQ…PTFLERHTSC (93 aa)). The tract at residues 1002–1004 (LDD) is CA2-binding. Positions 1012 to 1079 (KKKEDEKKKK…PTFLERHTSC (68 aa)) are disordered. A Phosphoserine; by PKA modification is found at serine 1026. The residue at position 1029 (serine 1029) is a Phosphoserine. Residues 1030 to 1033 (DSDD) are CA2-binding. Serine 1034 and serine 1044 each carry phosphoserine. The interval 1057 to 1059 (FLS) is required for basolateral targeting. A compositionally biased stretch (basic and acidic residues) spans 1062 to 1079 (KPSDRERSPTFLERHTSC). A Phosphoserine modification is found at serine 1069.

The protein belongs to the anion exchanger (TC 2.A.31) family. Homodimer. Interacts with CA2/carbonic anhydrase 2 and CA4/carbonic anhydrase 4 which may regulate transporter activity. Isoform 1 but not isoform 2 interacts with AHCYL1 (via PEST domain when phosphorylated); the interaction increases SLC4A4 isoform 1 activity. Interacts with AHCYL2. Post-translationally, phosphorylation of Ser-1026 by PKA increases the binding of CA2 and changes the Na(+):HCO3(-) stoichiometry of the transporter from 3:1 to 2:1. Phosphorylated in presence of STK39 and dephosphorylated in presence of PP1 phosphatase; phosphorylation seems to inhibit SLC4A4 activity. N-glycosylated. May not be necessary for the transporter basic functions. Expressed in vas deferens epithelia (at protein level).

The protein localises to the basolateral cell membrane. It localises to the cell membrane. It catalyses the reaction 2 hydrogencarbonate(out) + Na(+)(out) = 2 hydrogencarbonate(in) + Na(+)(in). The enzyme catalyses 3 hydrogencarbonate(out) + Na(+)(out) = 3 hydrogencarbonate(in) + Na(+)(in). Electrogenic sodium/bicarbonate cotransporter with a Na(+):HCO3(-) stoichiometry varying from 1:2 to 1:3. May regulate bicarbonate influx/efflux at the basolateral membrane of cells and regulate intracellular pH. The polypeptide is Electrogenic sodium bicarbonate cotransporter 1 (SLC4A4) (Sus scrofa (Pig)).